Reading from the N-terminus, the 162-residue chain is ATP synthase subunit b', chloroplastic (162 aa).

Residues 26–46 form a helical membrane-spanning segment; the sequence is ATLPLQALQFILLTVLLTFIF.

It belongs to the ATPase B chain family. In terms of assembly, F-type ATPases have 2 components, F(1) - the catalytic core - and F(0) - the membrane proton channel. F(1) has five subunits: alpha(3), beta(3), gamma(1), delta(1), epsilon(1). F(0) has four main subunits: a(1), b(1), b'(1) and c(10-14). The alpha and beta chains form an alternating ring which encloses part of the gamma chain. F(1) is attached to F(0) by a central stalk formed by the gamma and epsilon chains, while a peripheral stalk is formed by the delta, b and b' chains.

It localises to the plastid. The protein resides in the chloroplast thylakoid membrane. Functionally, f(1)F(0) ATP synthase produces ATP from ADP in the presence of a proton or sodium gradient. F-type ATPases consist of two structural domains, F(1) containing the extramembraneous catalytic core and F(0) containing the membrane proton channel, linked together by a central stalk and a peripheral stalk. During catalysis, ATP synthesis in the catalytic domain of F(1) is coupled via a rotary mechanism of the central stalk subunits to proton translocation. Component of the F(0) channel, it forms part of the peripheral stalk, linking F(1) to F(0). The b'-subunit is a diverged and duplicated form of b found in plants and photosynthetic bacteria. In Emiliania huxleyi (Coccolithophore), this protein is ATP synthase subunit b', chloroplastic.